The following is a 1148-amino-acid chain: Minor outer capsid protein P2 (1148 aa).

A PPPDE domain is found at 929-1148; the sequence is ENNAANFFER…LYIQSIYDAL (220 aa). Active-site residues include His-953 and Cys-1111.

It belongs to the phytoreovirus minor outer capsid protein P2 family. As to quaternary structure, interacts with host ent-kaurene oxidases OSKO1, OSKO2, OSKOL4 and OSKOL5; this interaction.

It is found in the virion. The protein resides in the host cytoplasm. In terms of biological role, minor capsid protein present in the outer capsid, which is required for adsorption of the virus onto host insect cells (Potential). Could play a role in the host plant virus induced dwarfism. This Rice dwarf virus (isolate O) (RDV) protein is Minor outer capsid protein P2.